A 905-amino-acid polypeptide reads, in one-letter code: uncharacterized protein (905 aa).

WD repeat units follow at residues 42 to 82, 86 to 128, 136 to 175, and 177 to 217; these read RSLK…FQAV, GYAR…SDPK, STLDGVSSVCYKKDTPLLLTGSTSRSVHIIDTRQQLDSVS, and VNTQ…SDNY. A phosphoserine mark is found at Ser-394 and Ser-397.

This sequence belongs to the WD repeat mio family.

This is an uncharacterized protein from Schizosaccharomyces pombe (strain 972 / ATCC 24843) (Fission yeast).